Reading from the N-terminus, the 138-residue chain is Protein FAM136A (138 aa).

Belongs to the FAM136 family.

This chain is Protein FAM136A (fam136a), found in Xenopus tropicalis (Western clawed frog).